The sequence spans 1956 residues: Probable cation-transporting ATPase 1 (1956 aa).

The Cytoplasmic portion of the chain corresponds to 1 to 35; sequence MHLMCTGLRNEKLINDRKILYGECNLNIKSDSFII. A helical membrane pass occupies residues 36–58; that stretch reads LLFKEIMNPFFIFQIFAMIVWSL. Over 59–61 the chain is Extracellular; the sequence is DNY. The helical transmembrane segment at 62 to 80 threads the bilayer; the sequence is IEYTISILFITSISIILEL. Residues 81-407 lie on the Cytoplasmic side of the membrane; the sequence is KNTIKNQKKI…KKELNLINDS (327 aa). The helical transmembrane segment at 408-427 threads the bilayer; it reads YKFLIILIIYALFSVFILLY. Over 428–440 the chain is Extracellular; the sequence is ITLSNNEYTNHII. Residues 441-462 form a helical membrane-spanning segment; the sequence is IKCLDIITDAIPPALPTTLTVG. Topologically, residues 463 to 1818 are cytoplasmic; it reads ISIAISRLKK…SLVNSFQLFK (1356 aa). Asp496 functions as the 4-aspartylphosphate intermediate in the catalytic mechanism. A disordered region spans residues 901 to 938; it reads YGNNNDDNNDDDNNNDDDNNDDNNNDDNNNDDNNDDNN. Residues 907-935 show a composition bias toward acidic residues; that stretch reads DNNDDDNNNDDDNNDDNNNDDNNNDDNND. Mg(2+) contacts are provided by Asp1760 and Asp1764. Residues 1819-1837 form a helical membrane-spanning segment; it reads FISLYSIMQCSQVLILYSI. Over 1838 to 1845 the chain is Extracellular; sequence SNKLTDNQ. The helical transmembrane segment at 1846 to 1863 threads the bilayer; it reads YIFIDIVTILPLSIFMCW. Over 1864 to 1881 the chain is Cytoplasmic; that stretch reads TSASEKLSKNIPIGKLFS. The chain crosses the membrane as a helical span at residues 1882–1905; sequence FPILISIYGQIIIQLFFVMISLVV. At 1906–1928 the chain is on the extracellular side; that stretch reads LMNLSFYKYDKNKVMKEKSDDTY. Residues 1929-1952 traverse the membrane as a helical segment; the sequence is LYKAQKYTLIYSLLFSKFVYVYIF. Residues 1953–1956 are Cytoplasmic-facing; the sequence is KYKE.

It belongs to the cation transport ATPase (P-type) (TC 3.A.3) family. Type V subfamily.

It localises to the membrane. It catalyses the reaction ATP + H2O = ADP + phosphate + H(+). In Plasmodium falciparum, this protein is Probable cation-transporting ATPase 1.